We begin with the raw amino-acid sequence, 159 residues long: Ribosomal RNA large subunit methyltransferase H (159 aa).

S-adenosyl-L-methionine is bound by residues L76, G108, and 127–132 (FGRMTL).

The protein belongs to the RNA methyltransferase RlmH family. In terms of assembly, homodimer.

It is found in the cytoplasm. It catalyses the reaction pseudouridine(1915) in 23S rRNA + S-adenosyl-L-methionine = N(3)-methylpseudouridine(1915) in 23S rRNA + S-adenosyl-L-homocysteine + H(+). Specifically methylates the pseudouridine at position 1915 (m3Psi1915) in 23S rRNA. This is Ribosomal RNA large subunit methyltransferase H from Lactococcus lactis subsp. cremoris (strain SK11).